The sequence spans 219 residues: uncharacterized protein (219 aa).

Transmembrane regions (helical) follow at residues 14-34, 37-57, 123-143, 155-175, and 189-209; these read LVYS…FGVL, TLGF…AGAS, FLLG…ALGV, VYSA…LPNL, and VALA…AALA.

The protein belongs to the AzlC family.

It localises to the cell membrane. This is an uncharacterized protein from Archaeoglobus fulgidus (strain ATCC 49558 / DSM 4304 / JCM 9628 / NBRC 100126 / VC-16).